The primary structure comprises 355 residues: Probable butyrate kinase (355 aa).

It belongs to the acetokinase family.

It localises to the cytoplasm. It carries out the reaction butanoate + ATP = butanoyl phosphate + ADP. This Listeria monocytogenes serovar 1/2a (strain ATCC BAA-679 / EGD-e) protein is Probable butyrate kinase.